We begin with the raw amino-acid sequence, 238 residues long: uncharacterized protein (238 aa).

Transmembrane regions (helical) follow at residues 6–26 (METL…ALMI), 45–65 (FILL…FFIL), 98–118 (IPIL…IGYI), 160–180 (IFGT…GYLL), and 186–206 (IVLC…LVGA).

Belongs to the TMEM19 family.

Its subcellular location is the cell membrane. This is an uncharacterized protein from Methanocaldococcus jannaschii (strain ATCC 43067 / DSM 2661 / JAL-1 / JCM 10045 / NBRC 100440) (Methanococcus jannaschii).